Here is a 300-residue protein sequence, read N- to C-terminus: Tyrosine recombinase XerC (300 aa).

One can recognise a Core-binding (CB) domain in the interval 1–86; the sequence is MESVLDAFDQ…AVKTFTAWAV (86 aa). The Tyr recombinase domain maps to 107 to 294; the sequence is TLPAVLRQDQ…TVARLRAVHD (188 aa). Residues Arg-151, Lys-175, His-246, Arg-249, and His-272 contribute to the active site. The active-site O-(3'-phospho-DNA)-tyrosine intermediate is the Tyr-281.

The protein belongs to the 'phage' integrase family. XerC subfamily. In terms of assembly, forms a cyclic heterotetrameric complex composed of two molecules of XerC and two molecules of XerD.

The protein localises to the cytoplasm. Site-specific tyrosine recombinase, which acts by catalyzing the cutting and rejoining of the recombining DNA molecules. The XerC-XerD complex is essential to convert dimers of the bacterial chromosome into monomers to permit their segregation at cell division. It also contributes to the segregational stability of plasmids. The chain is Tyrosine recombinase XerC from Mycobacterium sp. (strain JLS).